A 143-amino-acid chain; its full sequence is uncharacterized protein (143 aa).

Residues Met-1 to Val-14 show a composition bias toward basic and acidic residues. Residues Met-1 to Asp-25 form a disordered region.

This is an uncharacterized protein from Pseudoalteromonas phage PM2 (Bacteriophage PM2).